A 417-amino-acid chain; its full sequence is NADH-quinone oxidoreductase subunit D (417 aa).

The protein belongs to the complex I 49 kDa subunit family. As to quaternary structure, NDH-1 is composed of 14 different subunits. Subunits NuoB, C, D, E, F, and G constitute the peripheral sector of the complex.

Its subcellular location is the cell inner membrane. The enzyme catalyses a quinone + NADH + 5 H(+)(in) = a quinol + NAD(+) + 4 H(+)(out). Its function is as follows. NDH-1 shuttles electrons from NADH, via FMN and iron-sulfur (Fe-S) centers, to quinones in the respiratory chain. The immediate electron acceptor for the enzyme in this species is believed to be ubiquinone. Couples the redox reaction to proton translocation (for every two electrons transferred, four hydrogen ions are translocated across the cytoplasmic membrane), and thus conserves the redox energy in a proton gradient. In Polaromonas naphthalenivorans (strain CJ2), this protein is NADH-quinone oxidoreductase subunit D.